The chain runs to 289 residues: MTSSVLTPSLKLLAMTNSSSSTLFCIPSIFNISSSESHRFNFSLSSRPVNLTLSLKSKTLRNSSPVVTFVSQTSNWAEEEEGEDGSIGGTSVTVDESFESEDGVGFPEPPEEAKLFVGNLPYDVDSQALAMLFEQAGTVEISEVIYNRDTDQSRGFGFVTMSTVEEAEKAVEKFNSFEVNGRRLTVNRAAPRGSRPERQPRVYDAAFRIYVGNLPWDVDSGRLERLFSEHGKVVDARVVSDRETGRSRGFGFVQMSNENEVNVAIAALDGQNLEGRAIKVNVAEERTRR.

The transit peptide at 1 to 71 (MTSSVLTPSL…NSSPVVTFVS (71 aa)) directs the protein to the chloroplast. RRM domains follow at residues 113 to 191 (AKLF…RAAP) and 207 to 285 (FRIY…VAEE).

Post-translationally, ADP-ribosylated by the Pseudomonas syringae type III effector HopU1. ADP-ribosylation reduces the ability of the protein to bind RNA.

The protein localises to the plastid. It is found in the chloroplast. Its function is as follows. Required for specific RNA editing events in chloroplasts and stabilizes specific chloroplast mRNAs. The chain is RNA-binding protein CP31B, chloroplastic from Arabidopsis thaliana (Mouse-ear cress).